Reading from the N-terminus, the 75-residue chain is Defensin-like protein 59 (75 aa).

Positions 1–19 (MNITKSYVVIFFLVMLTNS) are cleaved as a signal peptide. 4 cysteine pairs are disulfide-bonded: Cys-39–Cys-73, Cys-43–Cys-66, Cys-52–Cys-71, and Cys-56–Cys-72.

Belongs to the DEFL family.

It is found in the secreted. The chain is Defensin-like protein 59 from Arabidopsis thaliana (Mouse-ear cress).